The following is a 79-amino-acid chain: MVERSQHLQDVFLKTVRKQEISLTIFLVNGVKLTGIVTSFDNFCILLRRDGHAQLVYKHAISTIMPGQPIKIFEGEGCE.

Positions 10–70 (DVFLKTVRKQ…ISTIMPGQPI (61 aa)) constitute a Sm domain.

The protein belongs to the Hfq family. As to quaternary structure, homohexamer.

RNA chaperone that binds small regulatory RNA (sRNAs) and mRNAs to facilitate mRNA translational regulation in response to envelope stress, environmental stress and changes in metabolite concentrations. Also binds with high specificity to tRNAs. This Bartonella bacilliformis (strain ATCC 35685 / KC583 / Herrer 020/F12,63) protein is RNA-binding protein Hfq.